A 250-amino-acid chain; its full sequence is Ribosomal RNA small subunit methyltransferase J (250 aa).

S-adenosyl-L-methionine contacts are provided by residues 96-97 (RD) and D168.

Belongs to the methyltransferase superfamily. RsmJ family.

The protein localises to the cytoplasm. The catalysed reaction is guanosine(1516) in 16S rRNA + S-adenosyl-L-methionine = N(2)-methylguanosine(1516) in 16S rRNA + S-adenosyl-L-homocysteine + H(+). In terms of biological role, specifically methylates the guanosine in position 1516 of 16S rRNA. This Neisseria gonorrhoeae (strain NCCP11945) protein is Ribosomal RNA small subunit methyltransferase J.